Reading from the N-terminus, the 331-residue chain is Ferrochelatase (331 aa).

Fe cation contacts are provided by His187 and Glu286.

It belongs to the ferrochelatase family.

It is found in the cytoplasm. The enzyme catalyses heme b + 2 H(+) = protoporphyrin IX + Fe(2+). It functions in the pathway porphyrin-containing compound metabolism; protoheme biosynthesis; protoheme from protoporphyrin-IX: step 1/1. Functionally, catalyzes the ferrous insertion into protoporphyrin IX. The sequence is that of Ferrochelatase from Legionella pneumophila (strain Paris).